The following is a 751-amino-acid chain: Glutathione biosynthesis bifunctional protein GshAB (751 aa).

A glutamate--cysteine ligase region spans residues 1–336; the sequence is MELDAVGKAI…QADQLTRQVL (336 aa).

It in the N-terminal section; belongs to the glutamate--cysteine ligase type 1 family. Type 2 subfamily. In terms of assembly, monomer.

The catalysed reaction is L-cysteine + L-glutamate + ATP = gamma-L-glutamyl-L-cysteine + ADP + phosphate + H(+). The enzyme catalyses gamma-L-glutamyl-L-cysteine + glycine + ATP = glutathione + ADP + phosphate + H(+). It functions in the pathway sulfur metabolism; glutathione biosynthesis; glutathione from L-cysteine and L-glutamate: step 1/2. The protein operates within sulfur metabolism; glutathione biosynthesis; glutathione from L-cysteine and L-glutamate: step 2/2. Synthesizes glutathione from L-glutamate and L-cysteine via gamma-L-glutamyl-L-cysteine. The sequence is that of Glutathione biosynthesis bifunctional protein GshAB (gshAB) from Lactiplantibacillus plantarum (strain ATCC BAA-793 / NCIMB 8826 / WCFS1) (Lactobacillus plantarum).